The following is a 124-amino-acid chain: MKSIGCDIIKVERFKSFLENKKKMERFFTHKEIENFKLKGGSIIESLAGKFAAKESLIKALTPLLQYKIRYSLKDIEVIKSLKGNAKFCLHNEIEKFAIKMNLKLYLTISHEKEYAIAFVMVEN.

Mg(2+)-binding residues include Asp7 and Glu55.

The protein belongs to the P-Pant transferase superfamily. AcpS family. Requires Mg(2+) as cofactor.

It is found in the cytoplasm. It carries out the reaction apo-[ACP] + CoA = holo-[ACP] + adenosine 3',5'-bisphosphate + H(+). In terms of biological role, transfers the 4'-phosphopantetheine moiety from coenzyme A to a Ser of acyl-carrier-protein. The sequence is that of Holo-[acyl-carrier-protein] synthase from Borreliella afzelii (strain PKo) (Borrelia afzelii).